The sequence spans 356 residues: Protein ATP1B4 (356 aa).

Residues 1 to 109 lie on the Nuclear side of the membrane; it reads MRRQLRSRRA…SLARTGQSRS (109 aa). The segment at 26-78 is disordered; that stretch reads EANHNYLADEEEEAEEEAQVMMVPGLEEEEEEEEGKEEEEEREEEEGQGQSTG. 2 stretches are compositionally biased toward acidic residues: residues 33-43 and 51-72; these read ADEEEEAEEEA and LEEE…EEEG. The helical; Signal-anchor for type II membrane protein transmembrane segment at 110–130 threads the bilayer; it reads LILVIYFFFYASLAAVITLFI. Over 131–356 the chain is Perinuclear space; the sequence is YMLFLAISPY…RIIFTLNIET (226 aa).

It belongs to the X(+)/potassium ATPases subunit beta family. Associates with a SMAD7-transcriptional complex. Interacts with TOR1AIP1. Does not associate with known Na,K-ATPase alpha-subunits. Interacts with SNW1. As to expression, expressed in skeletal muscle (at protein level). Expressed during postnatal development in skeletal muscle and heart.

The protein resides in the nucleus inner membrane. Its function is as follows. May act as a transcriptional coregulator during muscle development through its interaction with SNW1. Has lost its ancestral function as a Na,K-ATPase beta-subunit. In Mus musculus (Mouse), this protein is Protein ATP1B4 (Atp1b4).